We begin with the raw amino-acid sequence, 590 residues long: Glutamine--tRNA ligase (590 aa).

A 'HIGH' region motif is present at residues 55–65 (PEPNGYLHIGH). Residues 56–58 (EPN) and 62–68 (HIGHAKS) each bind ATP. 2 residues coordinate L-glutamine: Asp-93 and Tyr-238. ATP is bound by residues Thr-257 and 292 to 293 (RL). Residues 299 to 303 (ITSKR) carry the 'KMSKS' region motif.

The protein belongs to the class-I aminoacyl-tRNA synthetase family. As to quaternary structure, monomer.

Its subcellular location is the cytoplasm. The enzyme catalyses tRNA(Gln) + L-glutamine + ATP = L-glutaminyl-tRNA(Gln) + AMP + diphosphate. In Polynucleobacter asymbioticus (strain DSM 18221 / CIP 109841 / QLW-P1DMWA-1) (Polynucleobacter necessarius subsp. asymbioticus), this protein is Glutamine--tRNA ligase.